The following is a 502-amino-acid chain: NAD(P)H-quinone oxidoreductase subunit 2, chloroplastic (502 aa).

14 helical membrane passes run 15–35 (VLPE…DLIF), 42–62 (VLPY…LFQW), 79–99 (LSIA…LLSI), 108–128 (TLSE…LLCG), 132–152 (ILMI…LTGY), 167–187 (LLIG…LYGL), 210–230 (LASL…IAAA), 253–275 (VSSK…PYII), 278–298 (WHNI…IIAI), 307–327 (LGYS…AGNI), 334–354 (LVYM…VILF), 375–395 (ILAL…PFGG), 413–433 (LLVF…IKII), and 468–488 (ILIC…IISI).

This sequence belongs to the complex I subunit 2 family. As to quaternary structure, NDH is composed of at least 16 different subunits, 5 of which are encoded in the nucleus.

It localises to the plastid. Its subcellular location is the chloroplast thylakoid membrane. It carries out the reaction a plastoquinone + NADH + (n+1) H(+)(in) = a plastoquinol + NAD(+) + n H(+)(out). It catalyses the reaction a plastoquinone + NADPH + (n+1) H(+)(in) = a plastoquinol + NADP(+) + n H(+)(out). NDH shuttles electrons from NAD(P)H:plastoquinone, via FMN and iron-sulfur (Fe-S) centers, to quinones in the photosynthetic chain and possibly in a chloroplast respiratory chain. The immediate electron acceptor for the enzyme in this species is believed to be plastoquinone. Couples the redox reaction to proton translocation, and thus conserves the redox energy in a proton gradient. This is NAD(P)H-quinone oxidoreductase subunit 2, chloroplastic from Mesostigma viride (Green alga).